We begin with the raw amino-acid sequence, 540 residues long: Coatomer subunit delta (540 aa).

The segment at 169 to 263 (RHEEMLRGKR…GMILGGKSGT (95 aa)) is disordered. Positions 179 to 197 (SGGYTGISGGGGMGSGGMG) are enriched in gly residues. Residues 212-229 (NNNNNNNNNNNNNNNNNN) show a composition bias toward low complexity. A compositionally biased stretch (polar residues) spans 238 to 250 (SPNTSRPSAASSG). Positions 251 to 261 (SQGGMILGGKS) are enriched in gly residues. One can recognise an MHD domain in the interval 304–540 (QEGVHITVEE…TLSVDTYEIK (237 aa)).

The protein belongs to the adaptor complexes medium subunit family. Delta-COP subfamily. In terms of assembly, oligomeric complex that consists of at least the alpha, beta, beta', gamma, delta, epsilon and zeta subunits.

The protein resides in the cytoplasm. It localises to the golgi apparatus membrane. The protein localises to the cytoplasmic vesicle. Its subcellular location is the COPI-coated vesicle membrane. Functionally, the coatomer is a cytosolic protein complex that binds to dilysine motifs and reversibly associates with Golgi non-clathrin-coated vesicles, which further mediate biosynthetic protein transport from the ER, via the Golgi up to the trans Golgi network. Coatomer complex is required for budding from Golgi membranes, and is essential for the retrograde Golgi-to-ER transport of dilysine-tagged proteins. The protein is Coatomer subunit delta (copd) of Dictyostelium discoideum (Social amoeba).